The chain runs to 59 residues: Venom protein 27.7 (59 aa).

Residues 1 to 29 (MTFITLTIGLSLRTIFLIFIFLPPPHLLA) form the signal peptide.

It belongs to the non-disulfide-bridged peptide (NDBP) superfamily. Expressed by the venom gland.

The protein resides in the secreted. The polypeptide is Venom protein 27.7 (Lychas mucronatus (Chinese swimming scorpion)).